A 342-amino-acid polypeptide reads, in one-letter code: NLP effector protein Pc107869 (342 aa).

Residues 1-19 form the signal peptide; the sequence is MKTGFFLFAACAALVAVQA. An N-linked (GlcNAc...) asparagine glycan is attached at Asn24. The interval 41 to 125 is disordered; sequence APRTKAPPTK…PTPDPGPWEA (85 aa). Low complexity predominate over residues 55–75; that stretch reads QQSSLSGSQEQQQEQIETPAP. A compositionally biased stretch (pro residues) spans 93-121; sequence TPAPTPAPTPAPTPAPTPAPTPAPTPDPG. The short motif at 226–232 is the Hepta-peptide GHRHDWE motif element; that stretch reads GHRHDWE.

This sequence belongs to the Necrosis inducing protein (NPP1) family.

It is found in the secreted. Its function is as follows. Secreted effector that contributes strongly to virulence during infection by P.capsici. Induces cell death in the Solanaceae, including Nicotiana benthamiana. The sequence is that of NLP effector protein Pc107869 from Phytophthora capsici.